Here is a 237-residue protein sequence, read N- to C-terminus: Uridylate kinase (237 aa).

ATP is bound at residue 11 to 14; sequence KLSG. The involved in allosteric activation by GTP stretch occupies residues 18-23; it reads GGGGIG. Gly-52 contributes to the UMP binding site. ATP is bound by residues Gly-53 and Arg-57. UMP is bound by residues Asp-72 and 133-140; that span reads SGMPYFST. Gln-161, Tyr-167, and Asp-170 together coordinate ATP.

The protein belongs to the UMP kinase family. As to quaternary structure, homohexamer.

The protein localises to the cytoplasm. It carries out the reaction UMP + ATP = UDP + ADP. The protein operates within pyrimidine metabolism; CTP biosynthesis via de novo pathway; UDP from UMP (UMPK route): step 1/1. Its activity is regulated as follows. Allosterically activated by GTP. Inhibited by UTP. Its function is as follows. Catalyzes the reversible phosphorylation of UMP to UDP. In Cutibacterium acnes (strain DSM 16379 / KPA171202) (Propionibacterium acnes), this protein is Uridylate kinase.